A 339-amino-acid polypeptide reads, in one-letter code: DNA-directed RNA polymerase subunit alpha (339 aa).

An alpha N-terminal domain (alpha-NTD) region spans residues 1-235 (MTIQKNWQEL…DQLNVFVNFE (235 aa)). An alpha C-terminal domain (alpha-CTD) region spans residues 251 to 339 (FNPAFLKKVD…ELAKRFEDHY (89 aa)).

This sequence belongs to the RNA polymerase alpha chain family. As to quaternary structure, homodimer. The RNAP catalytic core consists of 2 alpha, 1 beta, 1 beta' and 1 omega subunit. When a sigma factor is associated with the core the holoenzyme is formed, which can initiate transcription.

The catalysed reaction is RNA(n) + a ribonucleoside 5'-triphosphate = RNA(n+1) + diphosphate. DNA-dependent RNA polymerase catalyzes the transcription of DNA into RNA using the four ribonucleoside triphosphates as substrates. This is DNA-directed RNA polymerase subunit alpha from Afipia carboxidovorans (strain ATCC 49405 / DSM 1227 / KCTC 32145 / OM5) (Oligotropha carboxidovorans).